A 675-amino-acid polypeptide reads, in one-letter code: DNA ligase (675 aa).

NAD(+) is bound by residues 32-36 (DAEYD), 81-82 (SL), and Glu113. Catalysis depends on Lys115, which acts as the N6-AMP-lysine intermediate. 4 residues coordinate NAD(+): Arg136, Glu173, Lys291, and Lys315. Residues Cys409, Cys412, Cys427, and Cys433 each contribute to the Zn(2+) site. Positions 595–675 (SEKTYFFNKK…ELNSLIRIKE (81 aa)) constitute a BRCT domain.

This sequence belongs to the NAD-dependent DNA ligase family. LigA subfamily. It depends on Mg(2+) as a cofactor. The cofactor is Mn(2+).

It carries out the reaction NAD(+) + (deoxyribonucleotide)n-3'-hydroxyl + 5'-phospho-(deoxyribonucleotide)m = (deoxyribonucleotide)n+m + AMP + beta-nicotinamide D-nucleotide.. In terms of biological role, DNA ligase that catalyzes the formation of phosphodiester linkages between 5'-phosphoryl and 3'-hydroxyl groups in double-stranded DNA using NAD as a coenzyme and as the energy source for the reaction. It is essential for DNA replication and repair of damaged DNA. In Buchnera aphidicola subsp. Acyrthosiphon pisum (strain APS) (Acyrthosiphon pisum symbiotic bacterium), this protein is DNA ligase.